A 195-amino-acid polypeptide reads, in one-letter code: GTP cyclohydrolase 1 (195 aa).

3 residues coordinate Zn(2+): Cys-85, His-88, and Cys-157.

It belongs to the GTP cyclohydrolase I family. In terms of assembly, toroid-shaped homodecamer, composed of two pentamers of five dimers.

It carries out the reaction GTP + H2O = 7,8-dihydroneopterin 3'-triphosphate + formate + H(+). It participates in cofactor biosynthesis; 7,8-dihydroneopterin triphosphate biosynthesis; 7,8-dihydroneopterin triphosphate from GTP: step 1/1. The sequence is that of GTP cyclohydrolase 1 from Clostridium acetobutylicum (strain ATCC 824 / DSM 792 / JCM 1419 / IAM 19013 / LMG 5710 / NBRC 13948 / NRRL B-527 / VKM B-1787 / 2291 / W).